Reading from the N-terminus, the 388-residue chain is MKIHEYQGKEILRKFGVAVPRGKPAFSVDEAVKVAEELGGPVWVVKAQIHAGGRGKGGGVKVAKSIEQVREYANQILGMQLVTHQTGPEGQKVNRLMIEEGADIKQELYVSLVVDRVSQKIVLMGSSEGGMDIEEVAEKHPELIHKVIVEPSTGLLDAQADDLAAKIGVPAASIPQARAILQGLYKAFWETDASLAEINPLNVSGDGKVTALDAKFNFDSNALFRHPEIVAYRDLDEEDPAEIEASKFDLAYISLDGNIGCLVNGAGLAMATMDTIKLFGGEPANFLDVGGGATTEKVTEAFKLMLKNPGLKAILVNIFGGIMRCDVIAEGVIAGSKAVNLNVPLVVRMKGTNEDLGKKMLADSGLPIISADSMEEAAQKVVAAAAGK.

An ATP-grasp domain is found at K9 to E244. Residues K46, G53–G55, E99, A102, and E107 contribute to the ATP site. Mg(2+) contacts are provided by N199 and D213. Substrate contacts are provided by residues N264 and G321–M323.

The protein belongs to the succinate/malate CoA ligase beta subunit family. As to quaternary structure, heterotetramer of two alpha and two beta subunits. Mg(2+) is required as a cofactor.

It catalyses the reaction succinate + ATP + CoA = succinyl-CoA + ADP + phosphate. The catalysed reaction is GTP + succinate + CoA = succinyl-CoA + GDP + phosphate. It functions in the pathway carbohydrate metabolism; tricarboxylic acid cycle; succinate from succinyl-CoA (ligase route): step 1/1. Its function is as follows. Succinyl-CoA synthetase functions in the citric acid cycle (TCA), coupling the hydrolysis of succinyl-CoA to the synthesis of either ATP or GTP and thus represents the only step of substrate-level phosphorylation in the TCA. The beta subunit provides nucleotide specificity of the enzyme and binds the substrate succinate, while the binding sites for coenzyme A and phosphate are found in the alpha subunit. This Burkholderia cenocepacia (strain ATCC BAA-245 / DSM 16553 / LMG 16656 / NCTC 13227 / J2315 / CF5610) (Burkholderia cepacia (strain J2315)) protein is Succinate--CoA ligase [ADP-forming] subunit beta.